The following is a 51-amino-acid chain: Lantibiotic streptococcin A-FF22 (51 aa).

Residues 1–25 constitute a propeptide that is removed on maturation; that stretch reads MEKNNEVINSIQEVSLEELDQIIGA. 2 cross-links (beta-methyllanthionine (Thr-Cys)) span residues 33 to 38 and 42 to 50; these read TISHEC and TWAFLATCC. A cross-link (lanthionine (Ser-Cys)) is located at residues 35-49; that stretch reads SHECHLNTWAFLATC. Position 48 is a 2,3-didehydrobutyrine (Thr48).

The protein belongs to the type A lantibiotic family. Post-translationally, maturation of lantibiotics involves the enzymatic conversion of Thr, and Ser into dehydrated AA and the formation of thioether bonds with cysteine. This is followed by membrane translocation and cleavage of the modified precursor.

It localises to the secreted. Its subcellular location is the cell surface. Lanthionine-containing peptide antibiotic (lantibiotic) active on certain Gram-positive bacteria. The bactericidal activity of lantibiotics is based on depolarization of energized bacterial cytoplasmic membranes, initiated by the formation of aqueous transmembrane pores. In Streptococcus pyogenes, this protein is Lantibiotic streptococcin A-FF22 (scnA).